A 771-amino-acid polypeptide reads, in one-letter code: MGRKKHRTIPAVEVYEKSDGFPMPTAPPMSPSRMDGVYPSHHVPPLHQAYHVQPASANHVPDQIARFNVIKPDRLAKRHNPQLYTKRGCTDVFCCFLFFVFLCGWVVVAGFGIMWGDPQRLIYPTDSEFRRCGVNLEGSYNFSKRPYLFYFDLTKCISYATALGGCQTTQLCVKECPSTYFSYLQLRTASVSEIQNKMKSVVYCTDDVDKTTVTTFQALQNLVQRGKCVSYTVKSVPVLQRCFPEAIFNAVDNVNNVLNSSNSLDYLKRTFGDDALIPQDIQITGQSSEVMKSVVEDQPVTHKVIHDLSQTWWQTLILIFAAGILSFIWTVIMRLLGSLIIWLSILIVLVALGFGAGFSWLKWNTLKTTGAIDDYSFHPAFDAYFEMPTTWLVVAIATSVLLLIFLLVILFIRQRISIACALISESSKAIGSMMSTLLFPLFPFLLHIGVFALWGSIAIWLASSGQEVCRLKETNGQVYNTSTKCDCTAKVTGCTYVGIEKESETIFWLQVYNLFAFFWLSCFVTALGDIALAGAFASYYWARDKRHDVPTFPVIRALNRAIRYNLGSIAFGSLIIAIVKIIRVLLEYIDHKLGKSQNKAVKWFLMCLKCCFWCLEVFFKFLTKNAYIMIAIYGKNFFSSAKDSFLLITRNIVRTVVVHKVAGILLFLGKSMITLGMGILSFYYFSGRWVVEGVPKVDLYYYFVPIVIVVIGSYFMADLFFDVYEMAVDTTFICFLEDSEQNDGSLERPFFMSEKLLEILGNKNDIPLHSK.

The helical transmembrane segment at 96–116 (FLFFVFLCGWVVVAGFGIMWG) threads the bilayer. 2 N-linked (GlcNAc...) asparagine glycosylation sites follow: Asn141 and Asn259. 4 helical membrane-spanning segments follow: residues 312–332 (WWQTLILIFAAGILSFIWTVI), 335–355 (LLGSLIIWLSILIVLVALGFG), 392–412 (LVVAIATSVLLLIFLLVILFI), and 441–461 (LFPFLLHIGVFALWGSIAIWL). An N-linked (GlcNAc...) asparagine glycan is attached at Asn480. Helical transmembrane passes span 514-534 (LFAFFWLSCFVTALGDIALAG), 566-586 (LGSIAFGSLIIAIVKIIRVLL), 603-623 (WFLMCLKCCFWCLEVFFKFLT), 662-682 (AGILLFLGKSMITLGMGILSF), and 701-721 (YYFVPIVIVVIGSYFMADLFF).

This sequence belongs to the CTL (choline transporter-like) family.

Its subcellular location is the membrane. The sequence is that of Choline transporter-like protein 1 (chtl-1) from Caenorhabditis elegans.